A 434-amino-acid polypeptide reads, in one-letter code: MFS-type transporter AFUA_1G00970 (434 aa).

Transmembrane regions (helical) follow at residues 21-41, 60-80, 87-107, 112-132, 145-165, 182-202, 240-260, 278-298, 301-321, 327-347, 364-384, and 393-413; these read VIGG…FGVF, WIGS…GVLV, VLLI…SLCS, IFLA…WPPF, LALG…SIMI, VLGF…TEPP, VFIS…NPFF, YMIS…GIVA, VGHY…SFCW, LTGL…ILSL, AIGF…PIGG, and LSLS…MGYA. A disordered region spans residues 201–225; it reads PPKQSQPQPRPALEATVEGGSASPT.

This sequence belongs to the major facilitator superfamily. Monocarboxylate porter (TC 2.A.1.13) family.

The protein localises to the cell membrane. MFS-type transporter; part of the gene cluster that mediates the biosynthesis of fumigermin that inhibits germination of spores of the inducing S.rapamycinicus, and thus helps the fungus to defend resources in the shared habitat against a bacterial competitor. May be involved in the secretion of fumigermin. In Aspergillus fumigatus (strain ATCC MYA-4609 / CBS 101355 / FGSC A1100 / Af293) (Neosartorya fumigata), this protein is MFS-type transporter AFUA_1G00970.